The sequence spans 192 residues: Putative cyclic ADP-D-ribose synthase ThsB1 (192 aa).

It belongs to the Thoeris B TIR-like family. Monomer; not seen to interact with ThsA.

Its subcellular location is the cytoplasm. Its activity is regulated as follows. Activated upon phage infection. TIR-like domain-containing component of the Thoeris antiviral defense system, composed of ThsA and ThsB. Expression of ThsA and ThsB in B.subtilis (strain BEST7003) confers resistance to phages SBSphiC, SBSphiJ and SPO1. Phage infection activates this protein so that 30 to 45 minutes post-infection with phage SPO1 it generates a signal molecule that in turn activates the NAD(+) hydrolase activity of ThsA. The signal is similar to cyclic ADP-D-ribose, but how it differs is unknown. In vitro purified (but unactivated) ThsB has no NAD(+) hydrolyzing activity, no activity on AMP, CMP, GMP or UMP, does not alter the activity of ThsA, does not bind DNA. Hydrolyzes NAD(+) to make a cyclic ADP-D-ribose (cADPR) signaling molecule; might make 3'cADPR. In Bacillus cereus (strain MSX-D12), this protein is Putative cyclic ADP-D-ribose synthase ThsB1.